Reading from the N-terminus, the 143-residue chain is MLEFLRKLIPWVLAGMLFGLGWHLGSDSMDAKWKQEVHNEYVKRVEAAKSTQRAIDAVSAKYQEDLAALEGSTDRIISDLRSDNKRLRVRVKTTGTSDGQCGFEPDGRAELDDRDAKRILAVTQKGDAWIRALQDTIRELQRK.

Residues 1–7 (MLEFLRK) are Cytoplasmic-facing. Residues 8-24 (LIPWVLAGMLFGLGWHL) traverse the membrane as a helical; Signal-anchor for type II membrane protein segment. Residues 25 to 143 (GSDSMDAKWK…QDTIRELQRK (119 aa)) are Periplasmic-facing.

It belongs to the T7likevirus i-spanin family. In terms of assembly, interacts (via C-terminus) with the spanin outer lipoprotein subunit (o-spanin) (via C-terminus). Part of the spanin complex which spans the entire periplasmic space. The spanin complex is composed of spanin inner membrane subunit and spanin outer membrane subunit.

It is found in the host cell inner membrane. Component of the spanin complex that disrupts the host outer membrane and participates in cell lysis during virus exit. The spanin complex conducts the final step in host lysis by disrupting the outer membrane after holin and endolysin action have permeabilized the inner membrane and degraded the host peptidoglycans. Host outer membrane disruption is possibly due to local fusion between the inner and outer membrane performed by the spanin complex. This is Spanin, inner membrane subunit from Escherichia coli (Bacteriophage T7).